We begin with the raw amino-acid sequence, 590 residues long: Arginine--tRNA ligase (590 aa).

A 'HIGH' region motif is present at residues 126–136 (PNVAKEMHVGH).

It belongs to the class-I aminoacyl-tRNA synthetase family. Monomer.

It is found in the cytoplasm. The enzyme catalyses tRNA(Arg) + L-arginine + ATP = L-arginyl-tRNA(Arg) + AMP + diphosphate. This is Arginine--tRNA ligase from Streptomyces avermitilis (strain ATCC 31267 / DSM 46492 / JCM 5070 / NBRC 14893 / NCIMB 12804 / NRRL 8165 / MA-4680).